Reading from the N-terminus, the 175-residue chain is NADH dehydrogenase [ubiquinone] iron-sulfur protein 4, mitochondrial (175 aa).

The N-terminal 42 residues, 1–42 (MAAVSMSVVLRQTLWRRRAVAVAALSVSRVPTRSLRTSTWRL), are a transit peptide targeting the mitochondrion. Residues 151-175 (KVPKPKSKSYGANFSWNKRTRVSTK) form a disordered region. Ser173 is modified (phosphoserine; by PKA).

This sequence belongs to the complex I NDUFS4 subunit family. In terms of assembly, mammalian complex I is composed of 45 different subunits. This is a component of the iron-sulfur (IP) fragment of the enzyme. Interacts with BCAP31 and TOMM40; the interaction mediates its translocation to the mitochondria; the interaction with BCAP31 is direct.

It is found in the mitochondrion inner membrane. Functionally, accessory subunit of the mitochondrial membrane respiratory chain NADH dehydrogenase (Complex I), that is believed not to be involved in catalysis. Complex I functions in the transfer of electrons from NADH to the respiratory chain. The immediate electron acceptor for the enzyme is believed to be ubiquinone. In Homo sapiens (Human), this protein is NADH dehydrogenase [ubiquinone] iron-sulfur protein 4, mitochondrial (NDUFS4).